The sequence spans 346 residues: Fe(3+) ions import ATP-binding protein FbpC 1 (346 aa).

An ABC transporter domain is found at 5–235; sequence LEVDGVDKSF…PIDVPTAEFI (231 aa). 37 to 44 provides a ligand contact to ATP; it reads GPSGCGKT.

The protein belongs to the ABC transporter superfamily. Fe(3+) ion importer (TC 3.A.1.10) family. The complex is composed of two ATP-binding proteins (FbpC), two transmembrane proteins (FbpB) and a solute-binding protein (FbpA).

It is found in the cell membrane. It carries out the reaction Fe(3+)(out) + ATP + H2O = Fe(3+)(in) + ADP + phosphate + H(+). In terms of biological role, part of the ABC transporter complex FbpABC involved in Fe(3+) ions import. Responsible for energy coupling to the transport system. In Rhodococcus jostii (strain RHA1), this protein is Fe(3+) ions import ATP-binding protein FbpC 1.